The following is a 380-amino-acid chain: Endo-chitosanase C (380 aa).

A signal peptide spans 1 to 22; it reads MPIKSFASRLALSLAICGTAMG. One copy of the R3-1 repeat lies at 276–304; sequence CSWPGHCAGATCSSNDDCSDDLTCQNGKC. Residues 311–341 form an R3-2 repeat; the sequence is ETCSWEGHCKGATCSSNDDCSDELACISGIC. The stretch at 348–378 is one R3-3 repeat; that stretch reads ETCEWEGHCEGASCSSHDDCDGNLACKNGKC.

Belongs to the glycosyl hydrolase 75 family.

Its subcellular location is the secreted. It catalyses the reaction Endohydrolysis of beta-(1-&gt;4)-linkages between D-glucosamine residues in a partly acetylated chitosan.. Its function is as follows. Chitosanase catalyzing the endo-type cleavage of chitosan, the deacylated form of chitin. Chitosanase may be crucial in the degradation of the deacetylated portion of chitin in the fungal cell wall. Chitoolisaccharides produced by the hydrolysis of partially N-acetylated chitosan are known to have many biological activities, including antibacterial activity, immune-enhancing effects, and elicitor activity. In Aspergillus oryzae (Yellow koji mold), this protein is Endo-chitosanase C (csnC).